Consider the following 379-residue polypeptide: L-lactate dehydrogenase (379 aa).

The region spanning 1–379 is the FMN hydroxy acid dehydrogenase domain; that stretch reads MIISASTDYR…IGRDSLVNLP (379 aa). A substrate-binding site is contributed by Y24. The FMN site is built by S106 and Q127. Y129 provides a ligand contact to substrate. T155 contributes to the FMN binding site. R164 contacts substrate. K251 lines the FMN pocket. Residue H275 is the Proton acceptor of the active site. R278 provides a ligand contact to substrate. Residue 306–330 coordinates FMN; sequence DSGIRTGLDVVRMLALGADTVLLGR.

Belongs to the FMN-dependent alpha-hydroxy acid dehydrogenase family. It depends on FMN as a cofactor.

The protein localises to the cell inner membrane. The catalysed reaction is (S)-lactate + A = pyruvate + AH2. Functionally, catalyzes the conversion of L-lactate to pyruvate. Is coupled to the respiratory chain. This is L-lactate dehydrogenase from Stenotrophomonas maltophilia (strain R551-3).